The primary structure comprises 351 residues: Quinolinate phosphoribosyltransferase [decarboxylating] 2b, mitochondrial (351 aa).

Substrate is bound by residues Arg142, 173–175 (TRK), Arg197, Lys207, Glu240, Asp267, 299–301 (SGN), and 320–322 (SGA).

This sequence belongs to the NadC/ModD family. As to expression, expressed in roots and flowers.

The protein resides in the mitochondrion. It carries out the reaction nicotinate beta-D-ribonucleotide + CO2 + diphosphate = quinolinate + 5-phospho-alpha-D-ribose 1-diphosphate + 2 H(+). The protein operates within alkaloid biosynthesis; nicotine biosynthesis. It functions in the pathway cofactor biosynthesis; NAD(+) biosynthesis; nicotinate D-ribonucleotide from quinolinate: step 1/1. Its function is as follows. Involved in the biosynthesis of pyridine alkaloid natural products, leading mainly to the production of anabasine, anatabine, nicotine and nornicotine, effective deterrents against herbivores with antiparasitic and pesticide properties (neurotoxins); nornicotine serves as the precursor in the synthesis of the carcinogen compound N'-nitrosonornicotine (NNN). Involved in the catabolism of quinolinic acid (QA). The chain is Quinolinate phosphoribosyltransferase [decarboxylating] 2b, mitochondrial from Nicotiana tabacum (Common tobacco).